Consider the following 190-residue polypeptide: Large ribosomal subunit protein uL5 (190 aa).

This sequence belongs to the universal ribosomal protein uL5 family. As to quaternary structure, part of the 50S ribosomal subunit; contacts the 5S rRNA and probably tRNA. Forms a bridge to the 30S subunit in the 70S ribosome.

In terms of biological role, this is one of the proteins that bind and probably mediate the attachment of the 5S RNA into the large ribosomal subunit, where it forms part of the central protuberance. In the 70S ribosome it contacts protein S13 of the 30S subunit (bridge B1b), connecting the 2 subunits; this bridge is implicated in subunit movement. May contact the P site tRNA; the 5S rRNA and some of its associated proteins might help stabilize positioning of ribosome-bound tRNAs. This chain is Large ribosomal subunit protein uL5, found in Methanocaldococcus jannaschii (strain ATCC 43067 / DSM 2661 / JAL-1 / JCM 10045 / NBRC 100440) (Methanococcus jannaschii).